The chain runs to 148 residues: UPF0260 protein YPK_2117 (148 aa).

The protein belongs to the UPF0260 family.

The protein is UPF0260 protein YPK_2117 of Yersinia pseudotuberculosis serotype O:3 (strain YPIII).